The following is a 294-amino-acid chain: uncharacterized protein (294 aa).

Disordered stretches follow at residues 25 to 59 and 77 to 141; these read VQVYRPVGQGAKRRINSEESDVSEDGNSKPKRVRR and LKDD…FEAP. Residues 86-139 are compositionally biased toward acidic residues; the sequence is YEELEDDDDDESIEEESDSEFEGESSSDEEESSYDSDSDYDSETEPEDSDDDFE. Residues 201–234 are a coiled coil; that stretch reads IKFYKRNTTFTEEELAEIEEDLLAEVKARYNNMK. A compositionally biased stretch (basic and acidic residues) spans 242–259; that stretch reads TIETTEDDKKAGEVNKYD. The tract at residues 242–294 is disordered; sequence TIETTEDDKKAGEVNKYDIDDDFIEKTESDEEEEITEDDSSEQETVVVEPVDE. Over residues 260–283 the composition is skewed to acidic residues; it reads IDDDFIEKTESDEEEEITEDDSSE.

This is an uncharacterized protein from Magallana gigas (Pacific oyster).